Consider the following 660-residue polypeptide: Replication protein E1 (660 aa).

The tract at residues 1-60 (MADNSGTEGEEEDCSEAERAGGWFMVEAIVDRRTGDTISSDEDEEDEGEDMVDFIDDRPI) is disordered. Over residues 39-54 (SSDEDEEDEGEDMVDF) the composition is skewed to acidic residues. A Nuclear localization signal motif is present at residues 87–89 (KRK). Phosphoserine; by host is present on residues S93, S97, S109, and S122. Positions 108-117 (LSPRLDAIKL) match the Nuclear export signal motif. The disordered stretch occupies residues 128–196 (LFQLPDSGYG…DGEESQPLST (69 aa)). The span at 136-163 (YGQTQVDTDTGPSQVQDGCETGDQNGRQ) shows a compositional bias: polar residues. The segment covering 169–186 (SGTKDGENGSQEEERAGG) has biased composition (basic and acidic residues). Positions 197-363 (ETEKGACGVL…QTMVGHALQE (167 aa)) are DNA-binding region. In terms of domain architecture, SF3 helicase spans 462–612 (VEFIPFLCAF…CPLTSKGEPV (151 aa)). 488–495 (GPADTGKS) provides a ligand contact to ATP. K569 is covalently cross-linked (Glycyl lysine isopeptide (Lys-Gly) (interchain with G-Cter in SUMO)). Residues 635–644 (DPDDEEENGE) show a composition bias toward acidic residues. The tract at residues 635–660 (DPDDEEENGEPSEPFRCVPGQNTRTV) is disordered.

The protein belongs to the papillomaviridae E1 protein family. As to quaternary structure, can form hexamers. Interacts with E2 protein; this interaction increases E1 DNA binding specificity. Interacts with host DNA polymerase subunit POLA2. Interacts with host single stranded DNA-binding protein RPA1. Interacts with host TOP1; this interaction stimulates the enzymatic activity of TOP1. Phosphorylated. In terms of processing, sumoylated.

The protein localises to the host nucleus. The enzyme catalyses Couples ATP hydrolysis with the unwinding of duplex DNA by translocating in the 3'-5' direction.. It carries out the reaction ATP + H2O = ADP + phosphate + H(+). In terms of biological role, ATP-dependent DNA 3'-5' helicase required for initiation of viral DNA replication. It forms a complex with the viral E2 protein. The E1-E2 complex binds to the replication origin which contains binding sites for both proteins. During the initial step, a dimer of E1 interacts with a dimer of protein E2 leading to a complex that binds the viral origin of replication with high specificity. Then, a second dimer of E1 displaces the E2 dimer in an ATP-dependent manner to form the E1 tetramer. Following this, two E1 monomers are added to each half of the site, which results in the formation of two E1 trimers on the viral ori. Subsequently, two hexamers will be created. The double hexamer acts as a bi-directional helicase machinery and unwinds the viral DNA and then recruits the host DNA polymerase to start replication. In Human papillomavirus 29, this protein is Replication protein E1.